The sequence spans 419 residues: Zinc finger CCCH domain-containing protein 62 (419 aa).

A C3H1-type zinc finger spans residues 89–116 (SLRKWVCKYWKDGKCKRGEQCQFLHSWS). WD repeat units follow at residues 129–168 (GHNKELKGIALPEGSDKLFSVSIDGTLRVWDCNSGQCVHS), 210–247 (GVVGQVNAMTIANGMLFAGTSSGSILVWKATTDSESDP), 256–293 (GHSGEVTCFAVGGQMLYSGSVDKTIKMWDLNTLQCIMT), 296–335 (QHTGTVTSLLCWDKCLISSSLDGTIKVWAYSENGILKVVQ), and 383–419 (FSTHTIATLTIGPQGLLFSGDESGNLRVWTLAAGNKV).

This Arabidopsis thaliana (Mouse-ear cress) protein is Zinc finger CCCH domain-containing protein 62 (ZFWD4).